A 134-amino-acid chain; its full sequence is Interleukin-5 (134 aa).

The first 21 residues, 1–21, serve as a signal peptide directing secretion; that stretch reads MRMHLHLTLVALGAAYVCANA. Residues asparagine 76 and asparagine 90 are each glycosylated (N-linked (GlcNAc...) asparagine).

Belongs to the IL-5 family. Homodimer; disulfide-linked. Interacts with IL5RA. Interacts with CSF2RB.

Its subcellular location is the secreted. Homodimeric cytokine expressed predominantly by T-lymphocytes and NK cells that plays an important role in the survival, differentiation, and chemotaxis of eosinophils. Also acts on activated and resting B-cells to induce immunoglobulin production, growth, and differentiation. Mechanistically, exerts its biological effects through a receptor composed of IL5RA subunit and the cytokine receptor common subunit beta/CSF2RB. Binding to the receptor leads to activation of various kinases including LYN, SYK and JAK2 and thereby propagates signals through the RAS-MAPK and JAK-STAT5 pathways respectively. In Bos taurus (Bovine), this protein is Interleukin-5 (IL5).